The following is a 297-amino-acid chain: Phosphatidylglycerol--prolipoprotein diacylglyceryl transferase (297 aa).

Transmembrane regions (helical) follow at residues 20–40, 58–78, 104–124, and 133–153; these read FLTIRWYGLLISISVVIGLFI, ILPSLIISSIIGARAYYVIFE, IAIWQGGIAIHGGLIGGFLCI, and IHLKTFIDILIPSIILGQSIG. Arg-154 contributes to the a 1,2-diacyl-sn-glycero-3-phospho-(1'-sn-glycerol) binding site. Transmembrane regions (helical) follow at residues 194-214, 225-245, and 266-286; these read TFIYESLWNFLIFILLITIFY, GFISCLYLIGYSFGRFWIEGL, and AQFISIFLFSSGLIGLFFLRL.

The protein belongs to the Lgt family.

The protein resides in the cell inner membrane. It catalyses the reaction L-cysteinyl-[prolipoprotein] + a 1,2-diacyl-sn-glycero-3-phospho-(1'-sn-glycerol) = an S-1,2-diacyl-sn-glyceryl-L-cysteinyl-[prolipoprotein] + sn-glycerol 1-phosphate + H(+). It functions in the pathway protein modification; lipoprotein biosynthesis (diacylglyceryl transfer). Its function is as follows. Catalyzes the transfer of the diacylglyceryl group from phosphatidylglycerol to the sulfhydryl group of the N-terminal cysteine of a prolipoprotein, the first step in the formation of mature lipoproteins. This is Phosphatidylglycerol--prolipoprotein diacylglyceryl transferase from Prochlorococcus marinus subsp. pastoris (strain CCMP1986 / NIES-2087 / MED4).